A 571-amino-acid chain; its full sequence is External alternative NAD(P)H-ubiquinone oxidoreductase B1, mitochondrial (571 aa).

Residues 1–35 (MTLLSSLGRASRSAPLASKLLLLGTLSGGSIVAYA) constitute a mitochondrion transit peptide. 51-81 (KVVVLGTGWAGISFLKDLDITSYDVQVVSPQ) contacts FAD. Residue 215-251 (LHFVIVGGGPTGVEFAAELHDFIIEDITKIYPSVKEL) participates in NAD(+) binding. Residues 372-407 (KILGDIANIFKAADADNSGTLTMEELEGVVDDIIVR) enclose the EF-hand domain. Ca(2+) is bound by residues Asp-385, Asp-387, Ser-389, Thr-391, and Glu-396. A Microbody targeting signal motif is present at residues 562–571 (YIFGRDSSRI).

It belongs to the NADH dehydrogenase family. The cofactor is FAD. As to expression, expressed in seedlings, roots, cotyledons, leaves, stems, buds and flowers.

It is found in the mitochondrion inner membrane. The protein localises to the peroxisome. The catalysed reaction is a quinone + NADH + H(+) = a quinol + NAD(+). The enzyme catalyses a ubiquinone + NADH + H(+) = a ubiquinol + NAD(+). With respect to regulation, activity is calcium-dependent with a more pronounced effect at higher pH. Its function is as follows. Alternative NADH-ubiquinone oxidoreductase which catalyzes the oxidation of mitochondrial NADH does not translocate protons across the inner mitochondrial membrane. Calcium-dependent NAD(P)H dehydrogenase. Binds calcium ions. This chain is External alternative NAD(P)H-ubiquinone oxidoreductase B1, mitochondrial (NDB1), found in Arabidopsis thaliana (Mouse-ear cress).